The sequence spans 188 residues: Probable DNA-directed RNA polymerase subunit delta (188 aa).

The 70-residue stretch at 14–83 (LSMIEVARAI…GENKWGLRSW (70 aa)) folds into the HTH HARE-type domain. Residues 119-188 (EDAIDYSADD…EDEEDEEEEE (70 aa)) form a disordered region.

It belongs to the RpoE family. RNAP is composed of a core of 2 alpha, a beta and a beta' subunits. The core is associated with a delta subunit and one of several sigma factors.

Participates in both the initiation and recycling phases of transcription. In the presence of the delta subunit, RNAP displays an increased specificity of transcription, a decreased affinity for nucleic acids, and an increased efficiency of RNA synthesis because of enhanced recycling. In Streptococcus equi subsp. equi (strain 4047), this protein is Probable DNA-directed RNA polymerase subunit delta.